Reading from the N-terminus, the 67-residue chain is Large ribosomal subunit protein uL29 (67 aa).

The protein belongs to the universal ribosomal protein uL29 family.

This Halalkalibacterium halodurans (strain ATCC BAA-125 / DSM 18197 / FERM 7344 / JCM 9153 / C-125) (Bacillus halodurans) protein is Large ribosomal subunit protein uL29 (rpmC).